Reading from the N-terminus, the 652-residue chain is Epithelial sodium channel subunit gamma (652 aa).

Residues 1–54 (MAPGEKIKAKIKKNLPVTGPQAPNIKELMQWYCLNTNTHGCRRIVVSRGRLRRL) are Cytoplasmic-facing. A helical membrane pass occupies residues 55–75 (LWILFTLTAVALIFWQCALLI). Topologically, residues 76-537 (SSFYTVSVSI…EQLLSNIGGQ (462 aa)) are extracellular. Intrachain disulfides connect cysteine 100-cysteine 286, cysteine 210-cysteine 217, cysteine 263-cysteine 270, cysteine 375-cysteine 460, cysteine 397-cysteine 456, cysteine 401-cysteine 452, cysteine 410-cysteine 437, and cysteine 412-cysteine 426. The interval 137-224 (RKRREAQSWS…SDCAVYTFSS (88 aa)) is gating release of inhibition by proteolysis (GRIP); protease-sensitive region that is responsible for the proteolytic activation of the channel. A glycan (N-linked (GlcNAc...) asparagine) is linked at asparagine 212. Asparagine 500 carries an N-linked (GlcNAc...) asparagine glycan. The chain crosses the membrane as a helical span at residues 538 to 558 (LGLWMSCSVVCVIEIIEVFFI). The Cytoplasmic segment spans residues 559 to 652 (DSLSIIARHQ…LTDTQTTFPH (94 aa)). A disordered region spans residues 610-631 (SALSLPPAPGSQVPGTPPPRYN). The short motif at 626–630 (PPPRY) is the PY motif; recruits WW domain-containing proteins and is thereby required for ubiquitination and inhibition of the channel by NEDD4 and NEDD4L element.

It belongs to the amiloride-sensitive sodium channel (TC 1.A.6) family. SCNN1G subfamily. As to quaternary structure, component of the heterotrimeric epithelial sodium channel (ENaC) composed of an alpha/SCNN1A, a beta/SCNN1B and a gamma/SCNN1G subunit. An additional delta/SCNN1D subunit can replace the alpha/SCNN1A subunit to form an alternative channel with specific properties. Interacts with WWP1 (via WW domains). Interacts with WWP2 (via WW domains); inhibits the channel. Interacts with the full-length immature form of PCSK9 (pro-PCSK9); inhibits ENaC by promoting its proteasomal degradation. Interacts with BPIFA1; the interaction is indirect via SCNN1B and inhibits the proteolytic maturation of SCNN1A and SCNN1G and the activation of ENaC. In terms of processing, phosphorylated on serine and threonine residues. Aldosterone and insulin increase the basal level of phosphorylation. Post-translationally, ubiquitinated. Can be ubiquitinated at multiple sites and undergo monoubiquitination and polyubiquitination. Ubiquitination by NEDD4 or NEDD4L inhibits the ENaC channel through endocytosis, intracellular retention and degradation of its individual subunits. ENaC is activated through the proteolytic maturation of its subunits. Furin cleaves the SCNN1G subunit first, followed by cleavage by prostasin (PRSS8), which results in a stepwise increase in the open probability of the channel due to the release of an inhibitory tract. BPIFA1, which is recruited by the SCNN1B subunit, prevents the proteolytic activation of ENaC. In terms of processing, N-glycosylated. N-linked glycans are processed to complex type during ENaC complex assembly and transport to the plasma membrane.

The protein resides in the apical cell membrane. It carries out the reaction Na(+)(in) = Na(+)(out). With respect to regulation, originally identified and characterized by its inhibition by the diuretic drug amiloride. This is one of the three pore-forming subunits of the heterotrimeric epithelial sodium channel (ENaC), a critical regulator of sodium balance and fluid homeostasis. ENaC operates in epithelial tissues, where it mediates the electrodiffusion of sodium ions from extracellular fluid through the apical membrane of cells, with water following osmotically. It plays a key role in maintaining sodium homeostasis through electrogenic sodium reabsorption in the kidneys. Additionally, ENaC is essential for airway surface liquid homeostasis, which is crucial for proper mucus clearance. The polypeptide is Epithelial sodium channel subunit gamma (Bos taurus (Bovine)).